A 470-amino-acid chain; its full sequence is Mitogen-activated protein kinase 15 (470 aa).

The 294-residue stretch at 13 to 306 (FDLQKRLGKG…VEQCLVHPYV (294 aa)) folds into the Protein kinase domain. ATP contacts are provided by residues 19–27 (LGKGAYGIV) and Lys-42. Residue Asp-137 is the Proton acceptor of the active site. Phosphothreonine is present on Thr-178. The TXY signature appears at 178 to 180 (TEY). Tyr-180 carries the post-translational modification Phosphotyrosine. Residues 362–445 (PYGEDKSRAP…PSSIKQRRRS (84 aa)) form a disordered region. Low complexity predominate over residues 394-406 (MDKNNSSSHDSSS). Residues 409–426 (LRERAASAESRTSKDSNG) show a composition bias toward basic and acidic residues.

This sequence belongs to the protein kinase superfamily. CMGC Ser/Thr protein kinase family. MAP kinase subfamily. The cofactor is Mg(2+). Dually phosphorylated on Thr-178 and Tyr-180, which activates the enzyme. In terms of tissue distribution, expressed in the URX neuron and in many other head sensory neurons. Isoform a: Expressed in head and tail ciliated sensory neurons, and in mid-body neurons. Isoform c: Expressed in head and tail ciliated sensory neurons, and in mid-body neurons.

The protein resides in the cell projection. It is found in the cilium. It localises to the cilium membrane. The protein localises to the cytoplasm. Its subcellular location is the cytoskeleton. The protein resides in the cilium axoneme. It is found in the cilium basal body. It localises to the cell junction. The protein localises to the perikaryon. Its subcellular location is the dendrite. The catalysed reaction is L-seryl-[protein] + ATP = O-phospho-L-seryl-[protein] + ADP + H(+). It catalyses the reaction L-threonyl-[protein] + ATP = O-phospho-L-threonyl-[protein] + ADP + H(+). Activated by threonine and tyrosine phosphorylation. Its function is as follows. Atypical MAPK protein. Regulates primary cilium formation in sensory neurons and the localization of ciliary proteins involved in cilium structure, transport, and signaling. Acts in dopamine (DA) neurons to support synaptic membrane dat-1 availability via activation of rho-1 thereby sustaining normal levels of DA clearance. Plays a role in male mating behavior, probably in part through regulating the localization of the polycystin pkd-2. Functions postembryonically in the URX sensory neurons to constrain URX dendrite growth throughout lifetime, probably by restricting expansion of the subcellular sensory compartment at the dendrite ending. The polypeptide is Mitogen-activated protein kinase 15 (Caenorhabditis elegans).